Reading from the N-terminus, the 317-residue chain is Ribosomal large subunit pseudouridine synthase D (317 aa).

Positions 15–89 constitute an S4 RNA-binding domain; it reads WRLDRALASL…IPLEIVFEDE (75 aa). Residue D141 is part of the active site.

It belongs to the pseudouridine synthase RluA family.

Its subcellular location is the cytoplasm. It carries out the reaction uridine(1911/1915/1917) in 23S rRNA = pseudouridine(1911/1915/1917) in 23S rRNA. Responsible for synthesis of pseudouridine from uracil at positions 1911, 1915 and 1917 in 23S ribosomal RNA. This chain is Ribosomal large subunit pseudouridine synthase D, found in Zymomonas mobilis subsp. mobilis (strain ATCC 31821 / ZM4 / CP4).